Consider the following 555-residue polypeptide: Perforin-1 (555 aa).

A signal peptide spans 1-21; sequence MAARLLLLGILLLLLPLPVPA. Disulfide bonds link cysteine 23-cysteine 76, cysteine 31-cysteine 73, and cysteine 102-cysteine 176. One can recognise an MACPF domain in the interval 27-375; the sequence is ARSECKRSHK…QYLTDRARWR (349 aa). The chain crosses the membrane as a beta stranded span at residues 129-149; sequence WKVGLDVTPKPTSNVHVSVAG. Asparagine 205 carries N-linked (GlcNAc...) asparagine glycosylation. Disulfide bonds link cysteine 242/cysteine 408, cysteine 377/cysteine 393, cysteine 381/cysteine 395, and cysteine 397/cysteine 407. A beta stranded membrane pass occupies residues 257–279; sequence CLTVEAQVNIGIHGSISAEAKAC. The 33-residue stretch at 376 to 408 folds into the EGF-like domain; sequence DCSRPCPPGRQKSPRDPCQCVCHGSAVTTQDCC. In terms of domain architecture, C2 spans 397 to 519; that stretch reads CHGSAVTTQD…CNLNHGHLKF (123 aa). Positions 429, 430, 433, 434, 436, 484, 486, 490, 491, and 492 each coordinate Ca(2+). Cystine bridges form between cysteine 497–cysteine 510 and cysteine 525–cysteine 534. Asparagine 549 carries an N-linked (GlcNAc...) asparagine glycan.

This sequence belongs to the complement C6/C7/C8/C9 family. As to quaternary structure, monomer, as soluble protein. Homooligomer; homooligomerizes to form a pore-forming ring. The cofactor is Ca(2+). Post-translationally, N-glycosylated.

Its subcellular location is the cytolytic granule. It is found in the secreted. It localises to the cell membrane. The protein resides in the endosome lumen. Pore-forming protein that plays a key role in granzyme-mediated programmed cell death, and in defense against virus-infected or neoplastic cells. Plays an important role in killing other cells that are recognized as non-self by the immune system, e.g. in transplant rejection or some forms of autoimmune disease. Can insert into the membrane of target cells in its calcium-bound form, oligomerize and form large pores. Promotes cytolysis and apoptosis of target cells by mediating the passage and uptake of cytotoxic granzymes. Facilitates the delivery of cationic cargo protein, while anionic or neural proteins are not delivered efficiently. Perforin pores allow the release of mature caspase-7 (CASP7) into the extracellular milieu. This is Perforin-1 (PRF1) from Homo sapiens (Human).